Consider the following 376-residue polypeptide: RCC1 domain-containing protein 1 (376 aa).

The segment at methionine 1–histidine 169 is interaction with KDM8. An RCC1 1 repeat occupies proline 6 to arginine 56. At arginine 141 the chain carries (3R)-3-hydroxyarginine. RCC1 repeat units lie at residues alanine 176 to glutamate 227, glycine 229 to arginine 317, and threonine 318 to valine 371.

As to quaternary structure, found in a complex with KDM8. Interacts (via N-terminus) with KDM8 (via N-terminus). Post-translationally, specifically hydroxylated (with R stereochemistry) at C-3 of ARG-141 by KDM8.

Its subcellular location is the chromosome. In terms of biological role, plays a role in transcriptional repression of satellite repeats, possibly by regulating H3K36 methylation levels in centromeric regions together with KDM8. Possibly together with KDM8, is involved in proper mitotic spindle organization and chromosome segregation. Plays a role in regulating alpha-tubulin deacetylation and cytoskeletal microtubule stability, thereby promoting cell migration and TGF-beta-induced epithelial to mesenchymal transition (EMT), potentially through the inhibition of KDM8. This chain is RCC1 domain-containing protein 1, found in Homo sapiens (Human).